A 77-amino-acid polypeptide reads, in one-letter code: Rhodotorucin-A peptides type 2 (77 aa).

The propeptide occupies 1–3 (MVA). A lipid anchor (S-farnesyl cysteine) is attached at Cys-14. The propeptide occupies 15–18 (TVAK). Cys-29 is lipidated: S-farnesyl cysteine. Positions 30 to 33 (TVSK) are excised as a propeptide. Cys-44 carries the S-farnesyl cysteine lipid modification. Residues 45-48 (TVSK) constitute a propeptide that is removed on maturation. A lipid anchor (S-farnesyl cysteine) is attached at Cys-59. A propeptide spanning residues 60 to 63 (TVSK) is cleaved from the precursor. Cys-74 is lipidated: S-farnesyl cysteine. The propeptide occupies 75 to 77 (TVA).

It is found in the cell membrane. In terms of biological role, rhodotorucin-A is a mating pheromone in cells of mating type A of Rhodosporidium toruloides. This chain is Rhodotorucin-A peptides type 2 (RHA2), found in Rhodotorula toruloides (Yeast).